Consider the following 429-residue polypeptide: 3-phosphoshikimate 1-carboxyvinyltransferase (429 aa).

3-phosphoshikimate contacts are provided by K23, S24, and R28. Residue K23 participates in phosphoenolpyruvate binding. Residues G95 and R123 each coordinate phosphoenolpyruvate. 3-phosphoshikimate contacts are provided by S168, Q170, D316, and K343. Residue Q170 coordinates phosphoenolpyruvate. D316 functions as the Proton acceptor in the catalytic mechanism. Positions 347 and 389 each coordinate phosphoenolpyruvate.

Belongs to the EPSP synthase family. Monomer.

The protein localises to the cytoplasm. It carries out the reaction 3-phosphoshikimate + phosphoenolpyruvate = 5-O-(1-carboxyvinyl)-3-phosphoshikimate + phosphate. It functions in the pathway metabolic intermediate biosynthesis; chorismate biosynthesis; chorismate from D-erythrose 4-phosphate and phosphoenolpyruvate: step 6/7. In terms of biological role, catalyzes the transfer of the enolpyruvyl moiety of phosphoenolpyruvate (PEP) to the 5-hydroxyl of shikimate-3-phosphate (S3P) to produce enolpyruvyl shikimate-3-phosphate and inorganic phosphate. This is 3-phosphoshikimate 1-carboxyvinyltransferase from Oceanobacillus iheyensis (strain DSM 14371 / CIP 107618 / JCM 11309 / KCTC 3954 / HTE831).